The chain runs to 420 residues: Pre-mRNA-splicing factor RBM22 (420 aa).

Position 2 is an N-acetylalanine (Ala2). Phosphoserine is present on residues Ser4 and Ser102. Residues Lys139 and Lys149 each participate in a glycyl lysine isopeptide (Lys-Gly) (interchain with G-Cter in SUMO2) cross-link. A C3H1-type zinc finger spans residues 159–186 (RNRPHICSFWVKGECKRGEECPYRHEKP). Lys212 carries the N6-acetyllysine modification. Positions 232 to 305 (TTLYVGGLGD…RRLNVKWGRS (74 aa)) constitute an RRM domain. Lys290 is covalently cross-linked (Glycyl lysine isopeptide (Lys-Gly) (interchain with G-Cter in SUMO2)). 2 disordered regions span residues 303–343 (GRSQ…AAEE) and 372–420 (APPP…HSSP). Positions 309-318 (RGKEKEKDGT) are enriched in basic and acidic residues.

It belongs to the SLT11 family. In terms of assembly, component of the pre-catalytic and catalytic spliceosome complexes. Component of the postcatalytic spliceosome P complex. Interacts with PDCD6; the interaction induces translocation of PDCD6 in the cytoplasm. Interacts with PPIL1.

The protein resides in the nucleus. The protein localises to the cytoplasm. Its function is as follows. Required for pre-mRNA splicing as component of the activated spliceosome. Involved in the first step of pre-mRNA splicing. Binds directly to the internal stem-loop (ISL) domain of the U6 snRNA and to the pre-mRNA intron near the 5' splice site during the activation and catalytic phases of the spliceosome cycle. Involved in both translocations of the nuclear SLU7 to the cytoplasm and the cytosolic calcium-binding protein PDCD6 to the nucleus upon cellular stress responses. The sequence is that of Pre-mRNA-splicing factor RBM22 (RBM22) from Homo sapiens (Human).